Reading from the N-terminus, the 203-residue chain is Small ribosomal subunit protein uS5 (203 aa).

Residues 49–112 (FEERVVKIKR…KNANNNLIKV (64 aa)) form the S5 DRBM domain.

It belongs to the universal ribosomal protein uS5 family. In terms of assembly, part of the 30S ribosomal subunit. Contacts proteins S4 and S8.

Its function is as follows. With S4 and S12 plays an important role in translational accuracy. In terms of biological role, located at the back of the 30S subunit body where it stabilizes the conformation of the head with respect to the body. The polypeptide is Small ribosomal subunit protein uS5 (Ureaplasma parvum serovar 3 (strain ATCC 700970)).